Reading from the N-terminus, the 110-residue chain is uncharacterized protein (110 aa).

The interval 85–110 (ARKAERPSQGGKDYNGTAKSAQSTTV) is disordered. A compositionally biased stretch (polar residues) spans 101 to 110 (TAKSAQSTTV).

This is an uncharacterized protein from Saccharomyces cerevisiae (strain ATCC 204508 / S288c) (Baker's yeast).